Reading from the N-terminus, the 345-residue chain is Phosphoribosylformylglycinamidine cyclo-ligase (345 aa).

The protein belongs to the AIR synthase family.

The protein localises to the cytoplasm. The catalysed reaction is 2-formamido-N(1)-(5-O-phospho-beta-D-ribosyl)acetamidine + ATP = 5-amino-1-(5-phospho-beta-D-ribosyl)imidazole + ADP + phosphate + H(+). The protein operates within purine metabolism; IMP biosynthesis via de novo pathway; 5-amino-1-(5-phospho-D-ribosyl)imidazole from N(2)-formyl-N(1)-(5-phospho-D-ribosyl)glycinamide: step 2/2. This is Phosphoribosylformylglycinamidine cyclo-ligase from Cronobacter sakazakii (strain ATCC BAA-894) (Enterobacter sakazakii).